A 307-amino-acid chain; its full sequence is Peroxisomal protein PEX21 (307 aa).

Residue C4 forms a Glycyl cysteine thioester (Cys-Gly) (interchain with G-Cter in ubiquitin) linkage. Residues 23 to 52 are disordered; sequence VGRVGGFNRPSGGLGQSSAEQQLQARAGER.

It belongs to the peroxin-21 family. Interacts with PEX7. Monoubiquitinated at Cys-4; acts as a signal for PEX21 extraction and is required for proper export from peroxisomes and recycling.

It is found in the cytoplasm. It localises to the cytosol. The protein resides in the peroxisome. Mediates peroxisomal import of proteins containing a C-terminal PTS2-type peroxisomal targeting signal via its interaction with PEX7. Interaction with PEX7 only takes place when PEX7 is associated with cargo proteins containing a PTS2 peroxisomal targeting signal. PEX7 along with PTS2-containing cargo proteins are then translocated through the PEX13-PEX14 docking complex together with PEX21. This chain is Peroxisomal protein PEX21 (PEX21), found in Eremothecium gossypii (strain ATCC 10895 / CBS 109.51 / FGSC 9923 / NRRL Y-1056) (Yeast).